The chain runs to 848 residues: Leucine--tRNA ligase (848 aa).

The short motif at 41 to 51 is the 'HIGH' region element; it reads PYPSGRIHMGH. Positions 619–623 match the 'KMSKS' region motif; sequence KMSKS. Lys-622 provides a ligand contact to ATP.

It belongs to the class-I aminoacyl-tRNA synthetase family.

Its subcellular location is the cytoplasm. It carries out the reaction tRNA(Leu) + L-leucine + ATP = L-leucyl-tRNA(Leu) + AMP + diphosphate. The sequence is that of Leucine--tRNA ligase from Roseobacter denitrificans (strain ATCC 33942 / OCh 114) (Erythrobacter sp. (strain OCh 114)).